We begin with the raw amino-acid sequence, 1024 residues long: E3 ISG15--protein ligase HERC5 (1024 aa).

Residues 1 to 13 (MERRSRRKSRRNG) are compositionally biased toward basic residues. The disordered stretch occupies residues 1–28 (MERRSRRKSRRNGRSTAGKAAATQPAKS). 5 RCC1 repeats span residues 96–155 (NMKI…ALSK), 156–208 (GGEL…ALSM), 209–260 (SGNI…LLTQ), 262–312 (GLLF…AYVS), and 314–364 (LGKV…LIMI). Residues 702–1024 (ENEDLRKELW…EAINNNRGFG (323 aa)) enclose the HECT domain. The Glycyl thioester intermediate role is filled by Cys-994.

In terms of assembly, (Microbial infection) Interacts with human cytomegalovirus protein UL26; this interaction inhibits global protein ISGylation. (Microbial infection) Interacts with Kaposi's sarcoma-associated herpesvirus protein v-IRF1; this interaction inhibits global protein ISGylation. As to quaternary structure, binds to CCNA1, CCNB1, CCND1 and CCNE1. Interacts with UBE2L6. Interacts with IRF3, this interaction is marginal in resting cells but enhanced upon viral infection. Interacts with influenza A virus NS1. Post-translationally, ISGylated. In terms of tissue distribution, expressed in testis and to a lesser degree in brain, ovary and placenta. Found in most tissues at low levels.

It localises to the cytoplasm. The protein resides in the perinuclear region. Its function is as follows. Major E3 ligase for ISG15 conjugation. Acts as a positive regulator of innate antiviral response in cells induced by interferon. Functions as part of the ISGylation machinery that recognizes target proteins in a broad and relatively non-specific manner. Catalyzes ISGylation of IRF3 which results in sustained activation, it attenuates IRF3-PIN1 interaction, which antagonizes IRF3 ubiquitination and degradation, and boosts the antiviral response. Mediates ISGylation of the phosphatase PTEN leading to its degradation, thus alleviating its suppression of the PI3K-AKT signaling pathway and promoting the production of cytokines that facilitate bacterial clearance. Interferes with the function of key viral structural proteins such as ebolavirus structural protein VP40 or HIV-1 protein GAG. Catalyzes ISGylation of influenza A viral NS1 which attenuates virulence; ISGylated NS1 fails to form homodimers and thus to interact with its RNA targets. Catalyzes ISGylation of papillomavirus type 16 L1 protein which results in dominant-negative effect on virus infectivity. Physically associated with polyribosomes, broadly modifies newly synthesized proteins in a cotranslational manner. In an interferon-stimulated cell, newly translated viral proteins are primary targets of ISG15. Promotes parkin/PRKN ubiquitin E3 ligase activity by suppressing the intramolecular interaction that maintains its autoinhibited conformation. In terms of biological role, (Microbial infection) Functions as an E3 ligase for ISGylation of hepatitis B virus protein X leading to enhanced viral replication due to increased interferon resistance. The protein is E3 ISG15--protein ligase HERC5 (HERC5) of Homo sapiens (Human).